The following is a 556-amino-acid chain: Formate--tetrahydrofolate ligase (556 aa).

Residue 65 to 72 (TPAGEGKS) participates in ATP binding.

This sequence belongs to the formate--tetrahydrofolate ligase family.

It catalyses the reaction (6S)-5,6,7,8-tetrahydrofolate + formate + ATP = (6R)-10-formyltetrahydrofolate + ADP + phosphate. The protein operates within one-carbon metabolism; tetrahydrofolate interconversion. In Streptococcus thermophilus (strain CNRZ 1066), this protein is Formate--tetrahydrofolate ligase.